Consider the following 723-residue polypeptide: Catalase-peroxidase (723 aa).

A cross-link (tryptophyl-tyrosyl-methioninium (Trp-Tyr) (with M-252)) is located at residues 98 to 226 (WHAAGSYRAA…LAAVQMGLIY (129 aa)). The active-site Proton acceptor is the histidine 99. The tryptophyl-tyrosyl-methioninium (Tyr-Met) (with W-98) cross-link spans 226-252 (YVNPEGVNGKPDPLKTAAQVRETFARM). Histidine 267 is a binding site for heme b. A disordered region spans residues 267–286 (HTVGKTHGNGRAENLGPSPE).

Belongs to the peroxidase family. Peroxidase/catalase subfamily. As to quaternary structure, homodimer or homotetramer. The cofactor is heme b. In terms of processing, formation of the three residue Trp-Tyr-Met cross-link is important for the catalase, but not the peroxidase activity of the enzyme.

It carries out the reaction H2O2 + AH2 = A + 2 H2O. It catalyses the reaction 2 H2O2 = O2 + 2 H2O. Functionally, bifunctional enzyme with both catalase and broad-spectrum peroxidase activity. This is Catalase-peroxidase from Thioalkalivibrio sulfidiphilus (strain HL-EbGR7).